The sequence spans 179 residues: Ribosome maturation factor RimM (179 aa).

Residues aspartate 102–phenylalanine 179 form the PRC barrel domain.

Belongs to the RimM family. Binds ribosomal protein uS19.

The protein localises to the cytoplasm. Its function is as follows. An accessory protein needed during the final step in the assembly of 30S ribosomal subunit, possibly for assembly of the head region. Essential for efficient processing of 16S rRNA. May be needed both before and after RbfA during the maturation of 16S rRNA. It has affinity for free ribosomal 30S subunits but not for 70S ribosomes. The polypeptide is Ribosome maturation factor RimM (Pseudomonas savastanoi pv. phaseolicola (strain 1448A / Race 6) (Pseudomonas syringae pv. phaseolicola (strain 1448A / Race 6))).